The following is a 442-amino-acid chain: Ribosomal protein uS12 methylthiotransferase RimO (442 aa).

The MTTase N-terminal domain maps to 8–118; it reads PKVGFVSLGC…VLGHVHKYVA (111 aa). Cys-17, Cys-53, Cys-82, Cys-150, Cys-154, and Cys-157 together coordinate [4Fe-4S] cluster. A Radical SAM core domain is found at 136–373; the sequence is LTPRHYAYLK…MELQQQVSIR (238 aa). Residues 376–442 form the TRAM domain; the sequence is ARKVGKEMTV…EYDLWASLIG (67 aa).

The protein belongs to the methylthiotransferase family. RimO subfamily. [4Fe-4S] cluster serves as cofactor.

The protein resides in the cytoplasm. The catalysed reaction is L-aspartate(89)-[ribosomal protein uS12]-hydrogen + (sulfur carrier)-SH + AH2 + 2 S-adenosyl-L-methionine = 3-methylsulfanyl-L-aspartate(89)-[ribosomal protein uS12]-hydrogen + (sulfur carrier)-H + 5'-deoxyadenosine + L-methionine + A + S-adenosyl-L-homocysteine + 2 H(+). Functionally, catalyzes the methylthiolation of an aspartic acid residue of ribosomal protein uS12. The protein is Ribosomal protein uS12 methylthiotransferase RimO of Aeromonas salmonicida (strain A449).